Here is a 516-residue protein sequence, read N- to C-terminus: Acetylcholine receptor subunit alpha-like (516 aa).

Residues 1 to 21 (MRSVTKYYLHGVVLFATGCAG) form the signal peptide. At 22–243 (NPDAKRLYDD…ITMRRKTLFY (222 aa)) the chain is on the extracellular side. 2 N-linked (GlcNAc...) asparagine glycosylation sites follow: asparagine 45 and asparagine 132. Disulfide bonds link cysteine 149/cysteine 163 and cysteine 222/cysteine 223. Residue asparagine 233 is glycosylated (N-linked (GlcNAc...) asparagine). The next 3 membrane-spanning stretches (helical) occupy residues 244–264 (TVNLIIPCMGISFLTVLVFYL), 274–294 (LSISILLSLTVFFLLLAEIIP), and 306–326 (FVLFTMILDTFSICVTVVVLN). Over 327–465 (VHFRSPQTHT…WKYVAMVLDR (139 aa)) the chain is Cytoplasmic. A helical membrane pass occupies residues 466-486 (PFLWIFTLAVVVGSAGIILQA).

This sequence belongs to the ligand-gated ion channel (TC 1.A.9) family. Acetylcholine receptor (TC 1.A.9.1) subfamily.

It is found in the postsynaptic cell membrane. It localises to the cell membrane. Its function is as follows. After binding acetylcholine, the AChR responds by an extensive change in conformation that affects all subunits and leads to opening of an ion-conducting channel across the plasma membrane. The polypeptide is Acetylcholine receptor subunit alpha-like (ARA1) (Manduca sexta (Tobacco hawkmoth)).